The sequence spans 837 residues: Granulocyte colony-stimulating factor receptor (837 aa).

A signal peptide spans 1 to 25; the sequence is MVGLGACTLTGVTLIFLLLPRSLES. 2 disulfide bridges follow: Cys26-Cys52 and Cys46-Cys102. An Ig-like C2-type domain is found at 26–118; that stretch reads CGHIEISPPV…SVQLLDQAEL (93 aa). Topologically, residues 26-626 are extracellular; it reads CGHIEISPPV…LTLRTLDPSD (601 aa). N-linked (GlcNAc...) asparagine glycosylation is found at Asn51, Asn94, and Asn129. Fibronectin type-III domains follow at residues 126–231, 236–331, 334–433, 434–529, and 530–624; these read SPSN…LEPP, LDIG…LRPT, APTI…NEGP, AVTG…GERA, and PPHA…TLDP. Intrachain disulfides connect Cys132–Cys143, Cys168–Cys219, Cys178–Cys187, Cys249–Cys296, and Cys267–Cys310. 2 N-linked (GlcNAc...) asparagine glycosylation sites follow: Asn186 and Asn279. The WSXWS motif signature appears at 319 to 323; the sequence is WSPWS. N-linked (GlcNAc...) asparagine glycans are attached at residues Asn392, Asn408, Asn474, Asn487, Asn582, and Asn613. Residues 627–650 form a helical membrane-spanning segment; it reads LNIFLGILCLVLLSTTCVVTWLCC. The Cytoplasmic segment spans residues 651 to 837; that stretch reads KRRGKTSFWS…VHGVEEQGGF (187 aa). The Box 1 motif motif lies at 658 to 666; it reads FWSDVPDPA.

The protein belongs to the type I cytokine receptor family. Type 2 subfamily. Homodimer. The dimeric receptor binds two CSF3 molecules. Interacts with CEACAM1; down-regulates the CSF3R-STAT3 pathway through recruitment of PTPN6 that dephosphorylates CSF3R. Post-translationally, N-glycosylated. In terms of tissue distribution, found in bone marrow.

It is found in the membrane. Receptor for granulocyte colony-stimulating factor (CSF3). In addition it may function in some adhesion or recognition events at the cell surface. The chain is Granulocyte colony-stimulating factor receptor (Csf3r) from Mus musculus (Mouse).